A 217-amino-acid polypeptide reads, in one-letter code: Ras-related protein RABA1f (217 aa).

20-27 (GDSGVGKS) contacts GTP. The short motif at 42-50 (SKSTIGVEF) is the Effector region element. GTP-binding positions include 68–72 (DTAGQ), 126–129 (NKAD), and 156–157 (SA). 2 S-geranylgeranyl cysteine lipidation sites follow: Cys214 and Cys215.

This sequence belongs to the small GTPase superfamily. Rab family.

The protein localises to the cell membrane. Functionally, intracellular vesicle trafficking and protein transport. The chain is Ras-related protein RABA1f (RABA1F) from Arabidopsis thaliana (Mouse-ear cress).